Consider the following 440-residue polypeptide: Chromosome partition protein MukF (440 aa).

The interval Leu-208–Ile-236 is leucine-zipper.

It belongs to the MukF family. In terms of assembly, interacts, and probably forms a ternary complex, with MukE and MukB via its C-terminal region. The complex formation is stimulated by calcium or magnesium. It is required for an interaction between MukE and MukB.

Its subcellular location is the cytoplasm. The protein localises to the nucleoid. Its function is as follows. Involved in chromosome condensation, segregation and cell cycle progression. May participate in facilitating chromosome segregation by condensation DNA from both sides of a centrally located replisome during cell division. Not required for mini-F plasmid partitioning. Probably acts via its interaction with MukB and MukE. Overexpression results in anucleate cells. It has a calcium binding activity. In Escherichia coli O9:H4 (strain HS), this protein is Chromosome partition protein MukF.